The following is a 494-amino-acid chain: Glutamate--tRNA ligase (494 aa).

The short motif at 10–20 (PSPTGDPHVGT) is the 'HIGH' region element. 4 residues coordinate Zn(2+): Cys-107, Cys-109, Cys-134, and His-136. The short motif at 251–255 (KLSKR) is the 'KMSKS' region element. Residue Lys-254 coordinates ATP.

Belongs to the class-I aminoacyl-tRNA synthetase family. Glutamate--tRNA ligase type 1 subfamily. As to quaternary structure, monomer. Zn(2+) serves as cofactor.

The protein resides in the cytoplasm. It carries out the reaction tRNA(Glu) + L-glutamate + ATP = L-glutamyl-tRNA(Glu) + AMP + diphosphate. Catalyzes the attachment of glutamate to tRNA(Glu) in a two-step reaction: glutamate is first activated by ATP to form Glu-AMP and then transferred to the acceptor end of tRNA(Glu). The sequence is that of Glutamate--tRNA ligase from Pseudomonas aeruginosa (strain UCBPP-PA14).